The following is a 225-amino-acid chain: ATP-dependent dethiobiotin synthetase BioD (225 aa).

An ATP-binding site is contributed by 15–20 (EIGKTF). Residue Thr-19 participates in Mg(2+) binding. Lys-40 is a catalytic residue. ATP is bound by residues Asp-57, 118–121 (EGVG), 178–179 (NR), and 207–209 (PHV). Mg(2+) contacts are provided by Asp-57 and Glu-118.

It belongs to the dethiobiotin synthetase family. Homodimer. Mg(2+) is required as a cofactor.

The protein localises to the cytoplasm. It carries out the reaction (7R,8S)-7,8-diammoniononanoate + CO2 + ATP = (4R,5S)-dethiobiotin + ADP + phosphate + 3 H(+). The protein operates within cofactor biosynthesis; biotin biosynthesis; biotin from 7,8-diaminononanoate: step 1/2. Catalyzes a mechanistically unusual reaction, the ATP-dependent insertion of CO2 between the N7 and N8 nitrogen atoms of 7,8-diaminopelargonic acid (DAPA, also called 7,8-diammoniononanoate) to form a ureido ring. This Aromatoleum aromaticum (strain DSM 19018 / LMG 30748 / EbN1) (Azoarcus sp. (strain EbN1)) protein is ATP-dependent dethiobiotin synthetase BioD.